The sequence spans 376 residues: Glucose-1-phosphate adenylyltransferase (376 aa).

Residues Tyr101, Gly166, Glu181–Lys182, and Ser192 contribute to the alpha-D-glucose 1-phosphate site.

It belongs to the bacterial/plant glucose-1-phosphate adenylyltransferase family. In terms of assembly, homotetramer.

The catalysed reaction is alpha-D-glucose 1-phosphate + ATP + H(+) = ADP-alpha-D-glucose + diphosphate. Its pathway is glycan biosynthesis; glycogen biosynthesis. Involved in the biosynthesis of ADP-glucose, a building block required for the elongation reactions to produce glycogen. Catalyzes the reaction between ATP and alpha-D-glucose 1-phosphate (G1P) to produce pyrophosphate and ADP-Glc. This is Glucose-1-phosphate adenylyltransferase from Bacillus cereus (strain ATCC 14579 / DSM 31 / CCUG 7414 / JCM 2152 / NBRC 15305 / NCIMB 9373 / NCTC 2599 / NRRL B-3711).